Here is a 311-residue protein sequence, read N- to C-terminus: uncharacterized protein (311 aa).

The next 9 membrane-spanning stretches (helical) occupy residues 11-31 (LDNW…GYLS), 34-54 (VGIV…FLSL), 72-92 (LAIS…LFGI), 101-121 (HVIV…FVAQ), 147-167 (IEGI…WYLM), 198-218 (WFGV…FALS), 233-253 (GFIA…SIVI), 257-277 (FALA…TYLL), and 279-299 (TIPF…NVGP).

The protein localises to the cell membrane. This is an uncharacterized protein from Mycoplasma pneumoniae (strain ATCC 29342 / M129 / Subtype 1) (Mycoplasmoides pneumoniae).